The following is an 802-amino-acid chain: DNA mismatch repair protein MutS (802 aa).

617–624 contacts ATP; it reads GPNMGGKS.

The protein belongs to the DNA mismatch repair MutS family.

In terms of biological role, this protein is involved in the repair of mismatches in DNA. It is possible that it carries out the mismatch recognition step. This protein has a weak ATPase activity. In Buchnera aphidicola subsp. Acyrthosiphon pisum (strain 5A), this protein is DNA mismatch repair protein MutS.